The primary structure comprises 62 residues: Small ribosomal subunit protein eS17 (62 aa).

This sequence belongs to the eukaryotic ribosomal protein eS17 family.

The protein is Small ribosomal subunit protein eS17 of Methanocaldococcus jannaschii (strain ATCC 43067 / DSM 2661 / JAL-1 / JCM 10045 / NBRC 100440) (Methanococcus jannaschii).